The chain runs to 185 residues: UPF0397 protein LBA0922 (185 aa).

The next 5 membrane-spanning stretches (helical) occupy residues 11–31 (VVAI…TSIP), 45–65 (FLAF…GFIG), 72–92 (IMYG…GWII), 111–131 (IILF…VVAP), and 146–166 (FVQG…IGTI).

This sequence belongs to the UPF0397 family.

It is found in the cell membrane. The protein is UPF0397 protein LBA0922 of Lactobacillus acidophilus (strain ATCC 700396 / NCK56 / N2 / NCFM).